The following is a 214-amino-acid chain: Ribosomal protein uL16-like (214 aa).

It belongs to the universal ribosomal protein uL16 family. Component of a male germ cell-specific 60S large ribosomal subunit (LSU), which contains RPL10L and RPL39L, instead of RPL10 and RPL39 paralogs. The composition of the rest of the complex is similar to classical ribosomes. As to expression, almost testis-specific. Also expressed in pre- and postmenopausal ovary.

It is found in the cytoplasm. Testis-specific component of the ribosome, which is required for the transition from prophase to metaphase in male meiosis I. Compensates for the inactivated X-linked RPL10 paralog during spermatogenesis. The ribosome is a large ribonucleoprotein complex responsible for the synthesis of proteins in the cell. The male germ cell-specific ribosome displays a ribosomal polypeptide exit tunnel of distinct size and charge states compared with the classical ribosome. It is responsible for regulating the biosynthesis and folding of a subset of male germ-cell-specific proteins that are essential for the formation of sperm. The protein is Ribosomal protein uL16-like of Homo sapiens (Human).